The following is a 201-amino-acid chain: 3-isopropylmalate dehydratase small subunit (201 aa).

This sequence belongs to the LeuD family. LeuD type 1 subfamily. Heterodimer of LeuC and LeuD.

It carries out the reaction (2R,3S)-3-isopropylmalate = (2S)-2-isopropylmalate. It participates in amino-acid biosynthesis; L-leucine biosynthesis; L-leucine from 3-methyl-2-oxobutanoate: step 2/4. Catalyzes the isomerization between 2-isopropylmalate and 3-isopropylmalate, via the formation of 2-isopropylmaleate. This Thermus thermophilus (strain ATCC BAA-163 / DSM 7039 / HB27) protein is 3-isopropylmalate dehydratase small subunit.